The chain runs to 248 residues: Carboxy-S-adenosyl-L-methionine synthase (248 aa).

S-adenosyl-L-methionine is bound by residues Tyr-40, 65–67 (GCS), 95–96 (DN), 123–124 (DI), Asn-138, and Arg-205.

Belongs to the class I-like SAM-binding methyltransferase superfamily. Cx-SAM synthase family. As to quaternary structure, homodimer.

It catalyses the reaction prephenate + S-adenosyl-L-methionine = carboxy-S-adenosyl-L-methionine + 3-phenylpyruvate + H2O. Its function is as follows. Catalyzes the conversion of S-adenosyl-L-methionine (SAM) to carboxy-S-adenosyl-L-methionine (Cx-SAM). This Hahella chejuensis (strain KCTC 2396) protein is Carboxy-S-adenosyl-L-methionine synthase.